A 248-amino-acid chain; its full sequence is 1-(5-phosphoribosyl)-5-[(5-phosphoribosylamino)methylideneamino] imidazole-4-carboxamide isomerase (248 aa).

D11 (proton acceptor) is an active-site residue. D132 functions as the Proton donor in the catalytic mechanism.

This sequence belongs to the HisA/HisF family.

The protein resides in the cytoplasm. The enzyme catalyses 1-(5-phospho-beta-D-ribosyl)-5-[(5-phospho-beta-D-ribosylamino)methylideneamino]imidazole-4-carboxamide = 5-[(5-phospho-1-deoxy-D-ribulos-1-ylimino)methylamino]-1-(5-phospho-beta-D-ribosyl)imidazole-4-carboxamide. The protein operates within amino-acid biosynthesis; L-histidine biosynthesis; L-histidine from 5-phospho-alpha-D-ribose 1-diphosphate: step 4/9. This chain is 1-(5-phosphoribosyl)-5-[(5-phosphoribosylamino)methylideneamino] imidazole-4-carboxamide isomerase, found in Bradyrhizobium diazoefficiens (strain JCM 10833 / BCRC 13528 / IAM 13628 / NBRC 14792 / USDA 110).